A 267-amino-acid polypeptide reads, in one-letter code: 2-keto-3-deoxy-L-rhamnonate aldolase (267 aa).

The Proton acceptor role is filled by histidine 49. Glutamine 151 provides a ligand contact to substrate. Glutamate 153 contacts Mg(2+). Positions 178 and 179 each coordinate substrate. Aspartate 179 contributes to the Mg(2+) binding site.

It belongs to the HpcH/HpaI aldolase family. KDR aldolase subfamily. Homohexamer. The cofactor is Mg(2+).

It catalyses the reaction 2-dehydro-3-deoxy-L-rhamnonate = (S)-lactaldehyde + pyruvate. Functionally, catalyzes the reversible retro-aldol cleavage of 2-keto-3-deoxy-L-rhamnonate (KDR) to pyruvate and lactaldehyde. In Salmonella gallinarum (strain 287/91 / NCTC 13346), this protein is 2-keto-3-deoxy-L-rhamnonate aldolase.